Consider the following 120-residue polypeptide: uncharacterized protein (120 aa).

N-linked (GlcNAc...) asparagine; by host glycans are attached at residues asparagine 29 and asparagine 68. Residues isoleucine 74–leucine 94 form a helical membrane-spanning segment.

It belongs to the asfivirus B117L family.

It is found in the host membrane. It localises to the virion. This is an uncharacterized protein from Ornithodoros (relapsing fever ticks).